A 328-amino-acid polypeptide reads, in one-letter code: Protein FAM76B (328 aa).

Residues 143–232 form a disordered region; sequence KEQRKGLGSS…ITQSMDSGGT (90 aa). A compositionally biased stretch (low complexity) spans 148–159; the sequence is GLGSSHSNSSSL. The segment covering 165-183 has biased composition (basic residues); sequence QRHHHHHQHHRHGSSHHKI. Positions 185–201 are enriched in polar residues; the sequence is GNLSPEQDQGLWKQSIQ. At serine 188 the chain carries Phosphoserine. A compositionally biased stretch (basic and acidic residues) spans 203 to 213; that stretch reads ETPKKKPKLET. Over residues 216–232 the composition is skewed to polar residues; the sequence is SNGDSSSITQSMDSGGT. The stretch at 237-316 forms a coiled coil; sequence LISQLKEEVM…KQVAALSKGK (80 aa).

The protein belongs to the FAM76 family. In terms of tissue distribution, highly expressed in hematopoietic and immune systems including in the thymus, spleen, kidney, and blood vessel.

Functionally, plays a role in hematopoiesis and immune system development, and participates in the inflammatory response. The protein is Protein FAM76B (fam76b) of Danio rerio (Zebrafish).